The following is a 97-amino-acid chain: Aspartyl/glutamyl-tRNA(Asn/Gln) amidotransferase subunit C (97 aa).

The protein belongs to the GatC family. As to quaternary structure, heterotrimer of A, B and C subunits.

The catalysed reaction is L-glutamyl-tRNA(Gln) + L-glutamine + ATP + H2O = L-glutaminyl-tRNA(Gln) + L-glutamate + ADP + phosphate + H(+). It catalyses the reaction L-aspartyl-tRNA(Asn) + L-glutamine + ATP + H2O = L-asparaginyl-tRNA(Asn) + L-glutamate + ADP + phosphate + 2 H(+). In terms of biological role, allows the formation of correctly charged Asn-tRNA(Asn) or Gln-tRNA(Gln) through the transamidation of misacylated Asp-tRNA(Asn) or Glu-tRNA(Gln) in organisms which lack either or both of asparaginyl-tRNA or glutaminyl-tRNA synthetases. The reaction takes place in the presence of glutamine and ATP through an activated phospho-Asp-tRNA(Asn) or phospho-Glu-tRNA(Gln). This Prochlorococcus marinus subsp. pastoris (strain CCMP1986 / NIES-2087 / MED4) protein is Aspartyl/glutamyl-tRNA(Asn/Gln) amidotransferase subunit C.